The primary structure comprises 418 residues: MSVAEQIRTIAAEARQASFAMAKLASAAKDQLLLDMALALINDAPHIIEENKKDLEAGQERGLSAAMLDRLMLNEARVKGMADAIREVAQLPDPVGEVTGMWKRPNDLMVGKMRIPLGVIGIIYESRPNVTSDAAALCLKSGNAVVLRGGSEAIHSNLAIATILKAQLAKHGIPAAALSLIPFVEREGVTEMLKQEEFIDVIIPRGGESLIRFVVENSKIPVIKHYKGVCHIFVDATADFEMAREIIVNAKTQRPGVCNALETLLIHKDIAETFVPFIYEALSSLKVELRGDKTFRQFAPKAAKATEEDWYAEYLELILAAAVVDGLDAAIDHINRYSSLHTESIITGDYANSQRFIREVNSGVVMVNASTRFSDGNQLGLGAEIGISTTKLHSFGPMGLTDLTTTKFIVYGSGQVRP.

The protein belongs to the gamma-glutamyl phosphate reductase family.

The protein localises to the cytoplasm. It carries out the reaction L-glutamate 5-semialdehyde + phosphate + NADP(+) = L-glutamyl 5-phosphate + NADPH + H(+). It functions in the pathway amino-acid biosynthesis; L-proline biosynthesis; L-glutamate 5-semialdehyde from L-glutamate: step 2/2. Functionally, catalyzes the NADPH-dependent reduction of L-glutamate 5-phosphate into L-glutamate 5-semialdehyde and phosphate. The product spontaneously undergoes cyclization to form 1-pyrroline-5-carboxylate. The chain is Gamma-glutamyl phosphate reductase from Citrifermentans bemidjiense (strain ATCC BAA-1014 / DSM 16622 / JCM 12645 / Bem) (Geobacter bemidjiensis).